The following is a 141-amino-acid chain: Hemoglobin subunit alpha-D (141 aa).

Residues 1-141 form the Globin domain; that stretch reads MLTAEDKKLI…VAAVLAEKYR (141 aa). Residues histidine 58 and histidine 87 each coordinate heme b.

The protein belongs to the globin family. Heterotetramer of two alpha-D chains and two beta chains. In terms of tissue distribution, red blood cells.

Functionally, involved in oxygen transport from the lung to the various peripheral tissues. The protein is Hemoglobin subunit alpha-D (HBAD) of Apus apus (Common swift).